We begin with the raw amino-acid sequence, 445 residues long: Exodeoxyribonuclease 7 large subunit (445 aa).

Belongs to the XseA family. As to quaternary structure, heterooligomer composed of large and small subunits.

The protein resides in the cytoplasm. It carries out the reaction Exonucleolytic cleavage in either 5'- to 3'- or 3'- to 5'-direction to yield nucleoside 5'-phosphates.. In terms of biological role, bidirectionally degrades single-stranded DNA into large acid-insoluble oligonucleotides, which are then degraded further into small acid-soluble oligonucleotides. This Staphylococcus haemolyticus (strain JCSC1435) protein is Exodeoxyribonuclease 7 large subunit.